Here is a 230-residue protein sequence, read N- to C-terminus: MLNTYITNILGIKLTEQQNGQFDAYYNLLVAYNKHTNLTRITSRDDADIKHFLDSVLISKLVDLNKVVTLCDMGAGAGFPSIPLLIVFPNIQVTIVESQIKRVQFLQELKQALGLEFNIVHDRAENFSSKNYQQFDIVTARALGELRLILEFGVPMLKVGGHFIAPKGSKFEEELTSAAHAIKVLNVELITQDLFELPLESGFRANLLFRKEKHVSGYPRPFPIIKKKPL.

S-adenosyl-L-methionine is bound by residues G74, F79, 124 to 125 (AE), and R141.

It belongs to the methyltransferase superfamily. RNA methyltransferase RsmG family.

It localises to the cytoplasm. In terms of biological role, specifically methylates the N7 position of a guanine in 16S rRNA. The chain is Ribosomal RNA small subunit methyltransferase G from Acholeplasma laidlawii (strain PG-8A).